The sequence spans 835 residues: Probable RNA-directed RNA polymerase (835 aa).

The protein belongs to the totiviridae RNA-directed RNA polymerase family.

It carries out the reaction RNA(n) + a ribonucleoside 5'-triphosphate = RNA(n+1) + diphosphate. RNA-dependent RNA polymerase which replicates the viral genome. Catalyzes the transcription of fully conservative plus-strand genomic RNAs that are extruded from the virion into the cytoplasm where they function as mRNAs for translation of viral proteins and also as substrates for encapsidation to form new virions. Once encapsidated, the positive strand is converted to dsRNA by the RNA-directed RNA polymerase. This chain is Probable RNA-directed RNA polymerase, found in Helminthosporium victoriae virus-190S (Hv190SV).